We begin with the raw amino-acid sequence, 159 residues long: SsrA-binding protein (159 aa).

A disordered region spans residues 133 to 159; the sequence is KKLHDKRETSKERDWNRQKNRLLKERG. Positions 137–159 are enriched in basic and acidic residues; sequence DKRETSKERDWNRQKNRLLKERG.

Belongs to the SmpB family.

The protein resides in the cytoplasm. Its function is as follows. Required for rescue of stalled ribosomes mediated by trans-translation. Binds to transfer-messenger RNA (tmRNA), required for stable association of tmRNA with ribosomes. tmRNA and SmpB together mimic tRNA shape, replacing the anticodon stem-loop with SmpB. tmRNA is encoded by the ssrA gene; the 2 termini fold to resemble tRNA(Ala) and it encodes a 'tag peptide', a short internal open reading frame. During trans-translation Ala-aminoacylated tmRNA acts like a tRNA, entering the A-site of stalled ribosomes, displacing the stalled mRNA. The ribosome then switches to translate the ORF on the tmRNA; the nascent peptide is terminated with the 'tag peptide' encoded by the tmRNA and targeted for degradation. The ribosome is freed to recommence translation, which seems to be the essential function of trans-translation. The sequence is that of SsrA-binding protein from Sinorhizobium medicae (strain WSM419) (Ensifer medicae).